The primary structure comprises 655 residues: A-type voltage-gated potassium channel KCND3 (655 aa).

Over 1–182 (MAAGVAAWLP…FENPHTSTLA (182 aa)) the chain is Cytoplasmic. The segment at 6–21 (AAWLPFARAAAIGWMP) is interaction with KCNIP1 and KCNIP2. The segment at 70–78 (EKEFFFNED) is interaction with KCNIP1. Residues histidine 104, cysteine 110, cysteine 131, and cysteine 132 each contribute to the Zn(2+) site. At serine 153 the chain carries Phosphoserine. The helical transmembrane segment at 183 to 204 (LVFYYVTGFFIAVSVITNVVET) threads the bilayer. Topologically, residues 205–223 (VPCGTVPGSKELPCGERYS) are extracellular. The chain crosses the membrane as a helical span at residues 224-246 (VAFFCLDTACVMIFTVEYLLRLF). Residues 247 to 253 (AAPSRYR) are Cytoplasmic-facing. The chain crosses the membrane as a helical span at residues 254–277 (FIRSVMSIIDVVAIMPYYIGLVMT). At 278 to 283 (NNEDVS) the chain is on the extracellular side. A helical; Voltage-sensor transmembrane segment spans residues 284 to 306 (GAFVTLRVFRVFRIFKFSRHSQG). At 307 to 318 (LRILGYTLKSCA) the chain is on the cytoplasmic side. The chain crosses the membrane as a helical span at residues 319–343 (SELGFLLFSLTMAIIIFATVMFYAE). The Extracellular portion of the chain corresponds to 344–352 (KGSSASKFT). An intramembrane region (helical) is located at residues 353–366 (SIPASFWYTIVTMT). K(+) is bound by residues threonine 367, leucine 368, glycine 369, and tyrosine 370. Positions 367 to 372 (TLGYGD) match the Selectivity filter motif. The stretch at 367–374 (TLGYGDMV) is an intramembrane region. Residues 378-400 (IAGKIFGSICSLSGVLVIALPVP) form a helical membrane-spanning segment. Over 401 to 655 (VIVSNFSRIY…ASNVVKVSVL (255 aa)) the chain is Cytoplasmic. Threonine 459 carries the post-translational modification Phosphothreonine. The interval 470–487 (SLIESQHHHLLHCLEKTT) is interaction with KCNIP1 and KCNIP2. The tract at residues 472–487 (IESQHHHLLHCLEKTT) is mediates dendritic targeting. Serine 569 carries the phosphoserine; by CaMK2D modification. Serine 585 carries the phosphoserine modification. Residues 618–644 (PAPPALTPEGETRPPPASPGPNTNIPS) form a disordered region.

Belongs to the potassium channel family. D (Shal) (TC 1.A.1.2) subfamily. Kv4.3/KCND3 sub-subfamily. Homotetramer. Heterotetramer with KCND2. Associates with the regulatory subunits KCNIP3 and KCNIP4. Interacts with KCNE1, KCNE2, SCN1B and KCNAB1 and DLG1. Component of heteromultimeric potassium channels. Identified in potassium channel complexes containing KCND1, KCND2, KCND3, KCNIP1, KCNIP2, KCNIP3, KCNIP4, DPP6 and DPP10. Interacts with KCNIP1; each KCNIP1 monomer interacts with two adjacent KCND3 subunits, through both the N-terminal inactivation ball of a KCND3 subunit and a C-terminal helix from the adjacent KCND3 subunit, clamping them together; this interaction stabilizes the tetrameric form and modulates the channel gating kinetics namely channel activation and inactivation kinetics and rate of recovery from inactivation. Interacts with DPP6; this interaction modulates the channel gating kinetics namely channel activation and inactivation kinetics and rate of recovery from inactivation. Interacts with KCNIP2; each KCNIP2 monomer interacts with two adjacent KCND3 subunits, through both the N-terminal inactivation ball of a KCND3 subunit and a C-terminal helix from the adjacent KCND3 subunit, clamping them together; this interaction modulates the channel gating kinetics. In terms of processing, regulated through phosphorylation at Ser-569 by CaMK2D. Detected in carotid body chemoreceptor cells and in frontal cortex.

It is found in the cell membrane. It localises to the sarcolemma. The protein resides in the cell projection. The protein localises to the dendrite. The catalysed reaction is K(+)(in) = K(+)(out). In terms of biological role, pore-forming (alpha) subunit of voltage-gated A-type potassium channels that mediates transmembrane potassium transport in excitable membranes, in brain and heart. In cardiomyocytes, may generate the transient outward potassium current I(To). In neurons, may conduct the transient subthreshold somatodendritic A-type potassium current (ISA). Kinetics properties are characterized by fast activation at subthreshold membrane potentials, rapid inactivation, and quick recovery from inactivation. Channel properties are modulated by interactions with regulatory subunits. Interaction with the regulatory subunits KCNIP1 or KCNIP2 modulates the channel gating kinetics namely channel activation and inactivation kinetics and rate of recovery from inactivation. Likewise, interaction with DPP6 modulates the channel gating kinetics namely channel activation and inactivation kinetics. The sequence is that of A-type voltage-gated potassium channel KCND3 from Oryctolagus cuniculus (Rabbit).